An 895-amino-acid polypeptide reads, in one-letter code: Androgen receptor (895 aa).

The modulating stretch occupies residues 1–533 (MEVQLGLGRV…PIDYYFPPQK (533 aa)). The interval 1–562 (MEVQLGLGRV…GSCKVFFKRA (562 aa)) is interaction with ZNF318. Disordered regions lie at residues 33 to 150 (VIQN…LSLL) and 175 to 211 (QLLQ…YLGG). Low complexity-rich tracts occupy residues 44–81 (AASA…GSPQ) and 175–200 (QLLQ…ASGA). Phosphoserine; by CDK9 is present on S65. A Phosphoserine modification is found at S79. Positions 201–211 (PTSSKDNYLGG) are enriched in polar residues. The residue at position 208 (Y208) is a Phosphotyrosine; by CSK. Residue S241 is modified to Phosphoserine. Y252 carries the post-translational modification Phosphotyrosine; by CSK and TNK2. Y292, Y331, Y342, and Y347 each carry phosphotyrosine; by CSK. A Phosphotyrosine; by CSK and TNK2 modification is found at Y348. K371 is covalently cross-linked (Glycyl lysine isopeptide (Lys-Gly) (interchain with G-Cter in SUMO)). The residue at position 378 (Y378) is a Phosphotyrosine; by CSK. K496 is covalently cross-linked (Glycyl lysine isopeptide (Lys-Gly) (interchain with G-Cter in SUMO)). Y510 and Y527 each carry phosphotyrosine; by CSK. Positions 527-894 (YYFPPQKTCL…GKVKPIYFHT (368 aa)) are interaction with LPXN. The nuclear receptor DNA-binding region spans 534-607 (TCLICGDEAS…AGMTLGARKL (74 aa)). 2 NR C4-type zinc fingers span residues 535–555 (CLIC…CGSC) and 571–595 (CASR…LRKC). Residues 547–637 (YGALTCGSCK…TEETAQKLTV (91 aa)) form an interaction with HIPK3 region. Residues 567–894 (QKYLCASRND…GKVKPIYFHT (328 aa)) are interaction with CCAR1. An interaction with KAT7 region spans residues 600 to 894 (MTLGARKLKK…GKVKPIYFHT (295 aa)). At S626 the chain carries Phosphoserine; by STK4/MST1. Positions 644–875 (ECQPIFLNVL…DFPEMMAEII (232 aa)) constitute an NR LBD domain. Residues N681 and R728 each coordinate 17beta-hydroxy-5alpha-androstan-3-one. Glycyl lysine isopeptide (Lys-Gly) (interchain with G-Cter in ubiquitin) cross-links involve residues K821 and K823. Residue T853 coordinates 17beta-hydroxy-5alpha-androstan-3-one. Residue Y891 is modified to Phosphotyrosine; by CSK.

The protein belongs to the nuclear hormone receptor family. NR3 subfamily. Binds DNA as a homodimer. Part of a ternary complex containing AR, EFCAB6/DJBP and PARK7. Interacts with HIPK3 and NR0B2 in the presence of androgen. The ligand binding domain interacts with KAT7/HBO1 in the presence of dihydrotestosterone. Interacts with EFCAB6/DJBP, PQBP1, RANBP9, RBAK, SPDEF, SRA1, TGFB1I1 and RREB1. Interacts with ZMIZ1/ZIMP10 and ZMIZ2/ZMIP7 which both enhance its transactivation activity. Interacts with SLC30A9 and RAD54L2/ARIP4. Interacts with MACROD1 (via macro domain). Interacts via the ligand-binding domain with LXXLL and FXXLF motifs from NCOA1, NCOA2, NCOA3 and MAGEA11. Interacts (via nuclear receptor DNA binding domain and nuclear receptor ligand binding domain) with NCOA4. The AR N-terminal poly-Gln region binds Ran resulting in enhancement of AR-mediated transactivation. Ran-binding decreases as the poly-Gln length increases. Interacts with HIP1 (via coiled coil domain). Interacts (via ligand-binding domain) with TRIM68. Interacts with TNK2. Interacts with USP26. Interacts with RNF6. Interacts (regulated by RNF6 probably through polyubiquitination) with RNF14; regulates AR transcriptional activity. Interacts with PRMT2 and TRIM24. Interacts with RACK1. Interacts with RANBP10; this interaction enhances dihydrotestosterone-induced AR transcriptional activity. Interacts with PRPF6 in a hormone-independent way; this interaction enhances dihydrotestosterone-induced AR transcriptional activity. Interacts with STK4/MST1. Interacts with ZIPK/DAPK3. Interacts with LPXN. Interacts with MAK. Part of a complex containing AR, MAK and NCOA3. Interacts with CRY1. Interacts with CCAR1 and GATA2. Interacts with ZNF318. Interacts with BUD31. Interacts with ARID4A. Interacts with ARID4B. Interacts (via NR LBD domain) with ZBTB7A; the interaction is direct and androgen-dependent. Interacts with NCOR1. Interacts with NCOR2. Interacts with CRY2 in a ligand-dependent manner. Phosphorylated in prostate cancer cells in response to several growth factors including EGF. Phosphorylation is induced by c-Src kinase (CSK). Tyr-510 is one of the major phosphorylation sites and an increase in phosphorylation and Src kinase activity is associated with prostate cancer progression. Phosphorylation by TNK2 enhances the DNA-binding and transcriptional activity. Phosphorylation at Ser-65 by CDK9 regulates AR promoter selectivity and cell growth. Post-translationally, sumoylated on Lys-371 (major) and Lys-496. Ubiquitinated. Deubiquitinated by USP26. 'Lys-6' and 'Lys-27'-linked polyubiquitination by RNF6 modulates AR transcriptional activity and specificity. In terms of processing, palmitoylated by ZDHHC7 and ZDHHC21. Palmitoylation is required for plasma membrane targeting and for rapid intracellular signaling via ERK and AKT kinases and cAMP generation.

Its subcellular location is the nucleus. The protein resides in the cytoplasm. Steroid hormone receptors are ligand-activated transcription factors that regulate eukaryotic gene expression and affect cellular proliferation and differentiation in target tissues. Transcription factor activity is modulated by bound coactivator and corepressor proteins like ZBTB7A that recruits NCOR1 and NCOR2 to the androgen response elements/ARE on target genes, negatively regulating androgen receptor signaling and androgen-induced cell proliferation. Transcription activation is also down-regulated by NR0B2. Activated, but not phosphorylated, by HIPK3 and ZIPK/DAPK3. In Macaca fascicularis (Crab-eating macaque), this protein is Androgen receptor (AR).